An 87-amino-acid chain; its full sequence is UPF0386 protein RSKD131_0371 (87 aa).

The protein belongs to the UPF0386 family.

This chain is UPF0386 protein RSKD131_0371, found in Cereibacter sphaeroides (strain KD131 / KCTC 12085) (Rhodobacter sphaeroides).